The chain runs to 439 residues: Homogentisate 1,2-dioxygenase (439 aa).

The active-site Proton acceptor is the His289. Fe cation is bound by residues His332 and Glu338. Homogentisate-binding residues include Tyr347 and His368. His368 contacts Fe cation.

The protein belongs to the homogentisate dioxygenase family. In terms of assembly, hexamer; dimer of trimers. Fe cation is required as a cofactor.

It carries out the reaction homogentisate + O2 = 4-maleylacetoacetate + H(+). It participates in amino-acid degradation; L-phenylalanine degradation; acetoacetate and fumarate from L-phenylalanine: step 4/6. Its function is as follows. Involved in the catabolism of homogentisate (2,5-dihydroxyphenylacetate or 2,5-OH-PhAc), a central intermediate in the degradation of phenylalanine and tyrosine. Catalyzes the oxidative ring cleavage of the aromatic ring of homogentisate to yield maleylacetoacetate. The chain is Homogentisate 1,2-dioxygenase from Xanthomonas euvesicatoria pv. vesicatoria (strain 85-10) (Xanthomonas campestris pv. vesicatoria).